The sequence spans 76 residues: UPF0270 protein PSPA7_1664 (76 aa).

Belongs to the UPF0270 family.

This Pseudomonas paraeruginosa (strain DSM 24068 / PA7) (Pseudomonas aeruginosa (strain PA7)) protein is UPF0270 protein PSPA7_1664.